A 111-amino-acid polypeptide reads, in one-letter code: Thiosulfate sulfurtransferase GlpE (111 aa).

Residues 16 to 104 enclose the Rhodanese domain; that stretch reads QTENAVLLDV…WQRAGLPMET (89 aa). Residue C64 is the Cysteine persulfide intermediate of the active site.

This sequence belongs to the GlpE family.

It localises to the cytoplasm. The catalysed reaction is thiosulfate + hydrogen cyanide = thiocyanate + sulfite + 2 H(+). It catalyses the reaction thiosulfate + [thioredoxin]-dithiol = [thioredoxin]-disulfide + hydrogen sulfide + sulfite + 2 H(+). In terms of biological role, transferase that catalyzes the transfer of sulfur from thiosulfate to thiophilic acceptors such as cyanide or dithiols. May function in a CysM-independent thiosulfate assimilation pathway by catalyzing the conversion of thiosulfate to sulfite, which can then be used for L-cysteine biosynthesis. The polypeptide is Thiosulfate sulfurtransferase GlpE (Actinobacillus succinogenes (strain ATCC 55618 / DSM 22257 / CCUG 43843 / 130Z)).